Consider the following 274-residue polypeptide: 2,3,4,5-tetrahydropyridine-2,6-dicarboxylate N-succinyltransferase (274 aa).

The substrate site is built by arginine 103 and aspartate 140.

Belongs to the transferase hexapeptide repeat family. As to quaternary structure, homotrimer.

The protein resides in the cytoplasm. It catalyses the reaction (S)-2,3,4,5-tetrahydrodipicolinate + succinyl-CoA + H2O = (S)-2-succinylamino-6-oxoheptanedioate + CoA. It participates in amino-acid biosynthesis; L-lysine biosynthesis via DAP pathway; LL-2,6-diaminopimelate from (S)-tetrahydrodipicolinate (succinylase route): step 1/3. The chain is 2,3,4,5-tetrahydropyridine-2,6-dicarboxylate N-succinyltransferase from Haemophilus ducreyi (strain 35000HP / ATCC 700724).